A 267-amino-acid chain; its full sequence is Dihydropteroate synthase (267 aa).

The 251-residue stretch at 1 to 251 (MTKTKIMGIL…NVELNAKLAK (251 aa)) folds into the Pterin-binding domain. Asn-11 lines the Mg(2+) pocket. (7,8-dihydropterin-6-yl)methyl diphosphate-binding positions include Thr-51, Asp-84, Asn-103, Asp-167, Lys-203, and 239–241 (RVH).

It belongs to the DHPS family. In terms of assembly, homodimer. It depends on Mg(2+) as a cofactor.

The enzyme catalyses (7,8-dihydropterin-6-yl)methyl diphosphate + 4-aminobenzoate = 7,8-dihydropteroate + diphosphate. It functions in the pathway cofactor biosynthesis; tetrahydrofolate biosynthesis; 7,8-dihydrofolate from 2-amino-4-hydroxy-6-hydroxymethyl-7,8-dihydropteridine diphosphate and 4-aminobenzoate: step 1/2. Catalyzes the condensation of para-aminobenzoate (pABA) with 6-hydroxymethyl-7,8-dihydropterin diphosphate (DHPt-PP) to form 7,8-dihydropteroate (H2Pte), the immediate precursor of folate derivatives. The chain is Dihydropteroate synthase (folP) from Staphylococcus aureus (strain MW2).